The following is a 464-amino-acid chain: Argininosuccinate lyase (464 aa).

This sequence belongs to the lyase 1 family. Argininosuccinate lyase subfamily.

The protein localises to the cytoplasm. The catalysed reaction is 2-(N(omega)-L-arginino)succinate = fumarate + L-arginine. The protein operates within amino-acid biosynthesis; L-arginine biosynthesis; L-arginine from L-ornithine and carbamoyl phosphate: step 3/3. The chain is Argininosuccinate lyase from Pseudomonas paraeruginosa (strain DSM 24068 / PA7) (Pseudomonas aeruginosa (strain PA7)).